Consider the following 352-residue polypeptide: tRNA-specific 2-thiouridylase MnmA (352 aa).

ATP is bound by residues Gly7–Ser14 and Leu33. Cys94 (nucleophile) is an active-site residue. Cysteines 94 and 193 form a disulfide. Residue Gly119 participates in ATP binding. Residues Lys143–Gln145 form an interaction with tRNA region. The active-site Cysteine persulfide intermediate is the Cys193. The segment at Arg298–Tyr299 is interaction with tRNA.

Belongs to the MnmA/TRMU family.

Its subcellular location is the cytoplasm. The enzyme catalyses S-sulfanyl-L-cysteinyl-[protein] + uridine(34) in tRNA + AH2 + ATP = 2-thiouridine(34) in tRNA + L-cysteinyl-[protein] + A + AMP + diphosphate + H(+). Functionally, catalyzes the 2-thiolation of uridine at the wobble position (U34) of tRNA, leading to the formation of s(2)U34. The chain is tRNA-specific 2-thiouridylase MnmA from Nostoc sp. (strain PCC 7120 / SAG 25.82 / UTEX 2576).